Here is a 188-residue protein sequence, read N- to C-terminus: Killer cell lectin-like receptor subfamily G member 1 (188 aa).

The Cytoplasmic segment spans residues 1 to 33 (MADSSIYSTLELPEAPQVQDESRWKLKAVLHRP). An ITIM motif motif is present at residues 5 to 10 (SIYSTL). The helical; Signal-anchor for type II membrane protein transmembrane segment at 34 to 56 (HLSRFAMVALGLLTVILMSLLMY) threads the bilayer. At 57-188 (QRILCCGSKD…LQWICKKVLY (132 aa)) the chain is on the extracellular side. A disulfide bond links cysteine 75 and cysteine 86. N-linked (GlcNAc...) asparagine glycans are attached at residues asparagine 82 and asparagine 97. One can recognise a C-type lectin domain in the interval 82–184 (NGSHCYYFSM…CEVALQWICK (103 aa)). 2 cysteine pairs are disulfide-bonded: cysteine 103-cysteine 183 and cysteine 162-cysteine 175.

As to quaternary structure, forms a monomer and homodimer; disulfide-linked. Interacts (via ITIM motif) with PTPN11 and INPP5D. Post-translationally, phosphorylated in response to monoclonal antibody G63 binding and antigenic stimulation. In terms of tissue distribution, expressed specifically on natural killer (NK) cells and activated CD8 T-cells. Not detected in spleen, thymus, lymph node, testis, brain or kidney. Not detected on mast cell lines, bone marrow-derived mast cells, or peritoneal mast cells.

Its subcellular location is the cell membrane. In terms of biological role, plays an inhibitory role on natural killer (NK) cells and T-cell functions upon binding to their non-MHC ligands. May mediate missing self recognition by binding to a highly conserved site on classical cadherins, enabling it to monitor expression of E-cadherin/CDH1, N-cadherin/CDH2 and R-cadherin/CDH4 on target cells. The sequence is that of Killer cell lectin-like receptor subfamily G member 1 (Klrg1) from Mus musculus (Mouse).